Reading from the N-terminus, the 820-residue chain is LPS-assembly protein LptD (820 aa).

The tract at residues 1 to 27 is disordered; sequence MDLSSLPDPLRPTHSRLPARRRDRAEP. Basic residues predominate over residues 13–22; sequence THSRLPARRR.

This sequence belongs to the LptD family. As to quaternary structure, component of the lipopolysaccharide transport and assembly complex. Interacts with LptE and LptA.

Its function is as follows. Together with LptE, is involved in the assembly of lipopolysaccharide (LPS) at the surface of the outer membrane. The protein is LPS-assembly protein LptD of Paracidovorax citrulli (strain AAC00-1) (Acidovorax citrulli).